The primary structure comprises 233 residues: Chaperone protein MrkB (233 aa).

The signal sequence occupies residues Met-1–Ala-18.

Belongs to the periplasmic pilus chaperone family.

It localises to the periplasm. Mediates assembly of pili by forming soluble multimeric complexes with pili subunits as an intermediate step in the assembly process. This protein is involved in type 3 pili assembly. The protein is Chaperone protein MrkB (mrkB) of Klebsiella pneumoniae.